A 36-amino-acid polypeptide reads, in one-letter code: MLESIINLVSSGAVDSHTPQTAVAAVLCAAMIGLFS.

This is an uncharacterized protein from Escherichia coli (strain K12).